The following is a 157-amino-acid chain: RNA-binding protein 3 (157 aa).

Residues 6 to 84 (GKLFVGGLNF…RQIRVDHAGK (79 aa)) enclose the RRM domain. An Omega-N-methylarginine modification is found at Arg47. A disordered region spans residues 81–157 (HAGKSARGTR…GGNYRDNYDN (77 aa)). Arg105 is subject to Asymmetric dimethylarginine; alternate. Arg105 is subject to Dimethylated arginine; in A2780 ovarian carcinoma cell line. Arg105 carries the omega-N-methylarginine; alternate modification. Gly residues predominate over residues 105-114 (RGGGDQGYGS). Omega-N-methylarginine occurs at positions 121 and 131. Phosphoserine is present on Ser147. Tyr155 is modified (phosphotyrosine).

As to quaternary structure, interacts with RPL4. Associates with the 60S ribosomal subunits in an RNA-independent manner. Associates with ribosomes. Post-translationally, arg-105 is dimethylated, probably to asymmetric dimethylarginine. In terms of processing, phosphorylated.

The protein localises to the nucleus. It localises to the cytoplasm. The protein resides in the cell projection. Its subcellular location is the dendrite. Its function is as follows. Cold-inducible mRNA binding protein that enhances global protein synthesis at both physiological and mild hypothermic temperatures. Reduces the relative abundance of microRNAs, when overexpressed. Enhances phosphorylation of translation initiation factors and active polysome formation. The protein is RNA-binding protein 3 (RBM3) of Homo sapiens (Human).